The sequence spans 100 residues: Small ribosomal subunit protein uS14c (100 aa).

This sequence belongs to the universal ribosomal protein uS14 family. In terms of assembly, part of the 30S ribosomal subunit.

It is found in the plastid. The protein resides in the chloroplast. Functionally, binds 16S rRNA, required for the assembly of 30S particles. The polypeptide is Small ribosomal subunit protein uS14c (Olimarabidopsis pumila (Dwarf rocket)).